The following is a 349-amino-acid chain: Mitomycin biosynthesis 6-O-methyltransferase (349 aa).

S-adenosyl-L-methionine-binding positions include Ser-167, Gly-190, 213–214, 240–241, and Lys-255; these read ER and DF. The active-site Proton acceptor is the His-259. Substrate is bound at residue Asn-288.

The protein belongs to the class I-like SAM-binding methyltransferase superfamily. Cation-independent O-methyltransferase family. COMT subfamily. As to quaternary structure, homodimer.

The catalysed reaction is 6-demethylmitomycin A + S-adenosyl-L-methionine = mitomycin A + S-adenosyl-L-homocysteine. It catalyses the reaction 6-demethylmitomycin B + S-adenosyl-L-methionine = mitomycin B + S-adenosyl-L-homocysteine. Its activity is regulated as follows. Completely inhibited by Zn(2+) and Cu(2+). In terms of biological role, involved in the biosynthesis of the quinone methoxy group present in the mitomycin A and B, which are used as anticancer agents. In vitro, catalyzes the 6-O-methylation of both C9-beta- and C9-alpha-configured 6-hydroxymitomycins via the transfer of the S-methyl group of S-adenosyl-L-methionine (AdoMet) to the 6-demethylmitomycin A and B. It can also use hydroxyquinone as substrate. This is Mitomycin biosynthesis 6-O-methyltransferase from Streptomyces lavendulae.